We begin with the raw amino-acid sequence, 213 residues long: Nucleolar protein 12 (213 aa).

Positions 32–95 (GFHKRKVERK…RLVTAKTESV (64 aa)) form a coiled coil. Positions 117-213 (ARLLGLPTPE…LTGKARHSGE (97 aa)) are disordered. Basic residues-rich tracts occupy residues 169–181 (AHSR…KRLR) and 197–213 (SKTR…HSGE).

This sequence belongs to the RRP17 family. In terms of assembly, interacts with KIAA1191.

The protein resides in the nucleus. It is found in the nucleolus. The protein localises to the cytoplasm. Its function is as follows. Multifunctional RNA binding protein that plays a role in RNA metabolism and DNA maintenance. Participates in the resolution of DNA stress and the maintenance of genome integrity by localizing to sites of DNA insults. Also plays a role in proper nucleolar organization by limiting nucleolar size and regulating nucleolar number. Mechanistically, regulates the nucleolar levels of fibrillarin and nucleolin, two key players in pre-rRNA processing and ribosome assembly. This Bos taurus (Bovine) protein is Nucleolar protein 12 (NOL12).